A 548-amino-acid chain; its full sequence is Isocitrate dehydrogenase [NAD(+)] 1, mitochondrial (548 aa).

Residues 1–53 (MSSLSTLRILHSTAGRRWASYYGIYPKSAACSSSSVAIARFFSTAADRPPKHA) constitute a mitochondrion transit peptide. Residues 132-134 (TIT) and Asn153 contribute to the NAD(+) site. D-threo-isocitrate is bound by residues 151 to 157 (SPNGAMR), Arg187, Tyr194, Lys266, Asp311, and Asp335. Residues Asp311, Asp335, and Asp339 each contribute to the Mg(2+) site. NAD(+) is bound by residues 372-377 (HGTVSD) and Asn391. The 36-residue stretch at 499–534 (IDEEAINGLFQKYDKNGDGFIDFEEFTRMLVKMNLA) folds into the EF-hand domain. The Ca(2+) site is built by Asp512, Asn514, Asp516, Phe518, and Glu523.

It belongs to the isocitrate and isopropylmalate dehydrogenases family. In terms of assembly, homodimer. The cofactor is Mg(2+). Requires Mn(2+) as cofactor.

It localises to the mitochondrion. It catalyses the reaction D-threo-isocitrate + NAD(+) = 2-oxoglutarate + CO2 + NADH. The homodimer exhibits allosteric regulation by isocitrate. Activated by Mn(2+) and Mg(2+). No activation by Na(+), K(+) or Li(+). Inhibited by Co(2+), Cu(2+) and Ni(2+), but not with Ca(2+) in the presence of Mn(2+) or Mg(2+). Competitively inhibited by NADH, but no effect on activity by 1.0 mM citrate. Strongly inhibited by excess ATP, ADP, AMP and alpha-ketoglutarate. Functionally, performs an essential role in the oxidative function of the tricarboxylic acid cycle and respiration. Catalyzes the decarboxylation of isocitrate to produce 2-oxoglutarate and generate NADH to provide electrons for energy production. No activity with NADP(+). This is Isocitrate dehydrogenase [NAD(+)] 1, mitochondrial from Phaeodactylum tricornutum (strain CCAP 1055/1).